The chain runs to 303 residues: Coenzyme PQQ synthesis protein B (303 aa).

This sequence belongs to the PqqB family.

It participates in cofactor biosynthesis; pyrroloquinoline quinone biosynthesis. May be involved in the transport of PQQ or its precursor to the periplasm. The sequence is that of Coenzyme PQQ synthesis protein B from Pseudomonas putida (strain GB-1).